A 266-amino-acid polypeptide reads, in one-letter code: Protein phosphatase 1 regulatory subunit 35 (266 aa).

The segment covering 1–10 (MMVYNGSQLE) has biased composition (polar residues). Positions 1–118 (MMVYNGSQLE…QDLGTPVQQS (118 aa)) are disordered. Residues 21-38 (PGPPPEPRAPEPGAPVPE) are compositionally biased toward pro residues. A phosphoserine mark is found at Ser46 and Ser51. The segment covering 62–79 (GRRKGRADRRGGARKGRQ) has biased composition (basic residues). Pro residues predominate over residues 86–97 (PPSPVRSGPPPA).

The protein belongs to the PPP1R35 family. Interacts with PPP1CA; this interaction mediates the PPP1CA phosphatase activity inhibition. Interacts with RTTN; this interaction allows the mutual recruitment to the centriole.

Its subcellular location is the cytoplasm. The protein localises to the cytoskeleton. It localises to the microtubule organizing center. It is found in the centrosome. The protein resides in the centriole. In terms of biological role, during centriole duplication, plays a role in the centriole elongation by promoting the recruitment of the microtubule-binding elongation machinery through its interaction with RTTN, leading to the centriole to centrosome conversion. In addition may play a role in the primary cilia assembly. The protein is Protein phosphatase 1 regulatory subunit 35 of Bos taurus (Bovine).